An 860-amino-acid chain; its full sequence is Alanine--tRNA ligase (860 aa).

Histidine 563, histidine 567, cysteine 665, and histidine 669 together coordinate Zn(2+).

This sequence belongs to the class-II aminoacyl-tRNA synthetase family. The cofactor is Zn(2+).

It is found in the cytoplasm. It catalyses the reaction tRNA(Ala) + L-alanine + ATP = L-alanyl-tRNA(Ala) + AMP + diphosphate. In terms of biological role, catalyzes the attachment of alanine to tRNA(Ala) in a two-step reaction: alanine is first activated by ATP to form Ala-AMP and then transferred to the acceptor end of tRNA(Ala). Also edits incorrectly charged Ser-tRNA(Ala) and Gly-tRNA(Ala) via its editing domain. This Vibrio cholerae serotype O1 (strain ATCC 39541 / Classical Ogawa 395 / O395) protein is Alanine--tRNA ligase.